We begin with the raw amino-acid sequence, 465 residues long: Fumarate hydratase class II (465 aa).

Substrate contacts are provided by residues 100–102 (SGT), 131–134 (HPND), 141–143 (SSN), and threonine 189. Histidine 190 serves as the catalytic Proton donor/acceptor. Serine 320 is an active-site residue. Residues serine 321 and 326–328 (KVN) each bind substrate.

Belongs to the class-II fumarase/aspartase family. Fumarase subfamily. In terms of assembly, homotetramer.

The protein resides in the cytoplasm. The catalysed reaction is (S)-malate = fumarate + H2O. Its pathway is carbohydrate metabolism; tricarboxylic acid cycle; (S)-malate from fumarate: step 1/1. Its function is as follows. Involved in the TCA cycle. Catalyzes the stereospecific interconversion of fumarate to L-malate. This chain is Fumarate hydratase class II, found in Mesorhizobium japonicum (strain LMG 29417 / CECT 9101 / MAFF 303099) (Mesorhizobium loti (strain MAFF 303099)).